The primary structure comprises 90 residues: uncharacterized protein (90 aa).

Positions 1–18 (MSRALFAVVLAFPLIALA) are cleaved as a signal peptide.

This is an uncharacterized protein from Escherichia coli (strain K12).